Reading from the N-terminus, the 124-residue chain is Small ribosomal subunit protein uS12 (124 aa).

At Asp89 the chain carries 3-methylthioaspartic acid. A disordered region spans residues 104 to 124 (TQGVKNRGQARSRYGAKKEKK). Residues 111-124 (GQARSRYGAKKEKK) are compositionally biased toward basic residues.

This sequence belongs to the universal ribosomal protein uS12 family. In terms of assembly, part of the 30S ribosomal subunit. Contacts proteins S8 and S17. May interact with IF1 in the 30S initiation complex.

Functionally, with S4 and S5 plays an important role in translational accuracy. Interacts with and stabilizes bases of the 16S rRNA that are involved in tRNA selection in the A site and with the mRNA backbone. Located at the interface of the 30S and 50S subunits, it traverses the body of the 30S subunit contacting proteins on the other side and probably holding the rRNA structure together. The combined cluster of proteins S8, S12 and S17 appears to hold together the shoulder and platform of the 30S subunit. This Micrococcus luteus (strain ATCC 4698 / DSM 20030 / JCM 1464 / CCM 169 / CCUG 5858 / IAM 1056 / NBRC 3333 / NCIMB 9278 / NCTC 2665 / VKM Ac-2230) (Micrococcus lysodeikticus) protein is Small ribosomal subunit protein uS12.